A 130-amino-acid polypeptide reads, in one-letter code: Small ribosomal subunit protein uS9 (130 aa).

The protein belongs to the universal ribosomal protein uS9 family.

This is Small ribosomal subunit protein uS9 from Teredinibacter turnerae (strain ATCC 39867 / T7901).